Reading from the N-terminus, the 507-residue chain is MVTIRPDEISSIIRKQIKQYNQEVEVVNIGIVLQVGDGIARIHGLDEVMAGELVEFEDGTVGIALNLESNNVGAVLMGDGLMIQEGSSVRATGKIAQIPVSDAYSGRVVNALAQPIDGRGKITASESRSIESPAPGIISRRSVYEPLQTGLIAIDSMIPIGRGQRELIIGDRQTGKTAVATDTIINQKGQDVICVYVAIGQKASSVAQVVNIFQERGAMEYTIVVAETADSPATLQYLAPYTGAALAEYFMYKEQHTLIIYDDLSKQARAYRQMSLLLRRPPGREAYPGDVFYLHSRLLERAAKLSSQLGEGSMTALPIVETQAGDVSAYIPTNVISITDGQIFLSADLFNAGIRPAINVGISVSRVGSAAQIKAMKQVAGKLKLELAQFAELEAFAQFASDLDRATQNQLARGQRLRELLKQSQSAPLTVEEQIATIYAGANGYLDILEIVQVRKFLVQLREYLITNKPQFGEIIRSTRAFTEQAEALLKEAIQEHIELFLLREQK.

170 to 177 lines the ATP pocket; it reads GDRQTGKT.

Belongs to the ATPase alpha/beta chains family. In terms of assembly, F-type ATPases have 2 components, CF(1) - the catalytic core - and CF(0) - the membrane proton channel. CF(1) has five subunits: alpha(3), beta(3), gamma(1), delta(1), epsilon(1). CF(0) has four main subunits: a, b, b' and c.

The protein resides in the plastid. It is found in the chloroplast thylakoid membrane. It catalyses the reaction ATP + H2O + 4 H(+)(in) = ADP + phosphate + 5 H(+)(out). Its function is as follows. Produces ATP from ADP in the presence of a proton gradient across the membrane. The alpha chain is a regulatory subunit. This chain is ATP synthase subunit alpha, chloroplastic, found in Cycas taitungensis (Prince sago).